Reading from the N-terminus, the 195-residue chain is Glycerol-3-phosphate acyltransferase (195 aa).

Helical transmembrane passes span 4–24, 53–73, 80–100, 110–130, 133–153, and 154–174; these read GLIL…GLLL, GLAA…VLIA, TAVW…WLGF, LGVL…IWLA, FLFR…PIAL, and YFLS…IVFI.

The protein belongs to the PlsY family. In terms of assembly, probably interacts with PlsX.

It is found in the cell inner membrane. The catalysed reaction is an acyl phosphate + sn-glycerol 3-phosphate = a 1-acyl-sn-glycero-3-phosphate + phosphate. It functions in the pathway lipid metabolism; phospholipid metabolism. In terms of biological role, catalyzes the transfer of an acyl group from acyl-phosphate (acyl-PO(4)) to glycerol-3-phosphate (G3P) to form lysophosphatidic acid (LPA). This enzyme utilizes acyl-phosphate as fatty acyl donor, but not acyl-CoA or acyl-ACP. In Mesorhizobium japonicum (strain LMG 29417 / CECT 9101 / MAFF 303099) (Mesorhizobium loti (strain MAFF 303099)), this protein is Glycerol-3-phosphate acyltransferase.